The primary structure comprises 872 residues: Alanine--tRNA ligase (872 aa).

4 residues coordinate Zn(2+): histidine 558, histidine 562, cysteine 660, and histidine 664.

It belongs to the class-II aminoacyl-tRNA synthetase family. It depends on Zn(2+) as a cofactor.

The protein localises to the cytoplasm. It catalyses the reaction tRNA(Ala) + L-alanine + ATP = L-alanyl-tRNA(Ala) + AMP + diphosphate. Functionally, catalyzes the attachment of alanine to tRNA(Ala) in a two-step reaction: alanine is first activated by ATP to form Ala-AMP and then transferred to the acceptor end of tRNA(Ala). Also edits incorrectly charged Ser-tRNA(Ala) and Gly-tRNA(Ala) via its editing domain. This is Alanine--tRNA ligase from Chlamydia pneumoniae (Chlamydophila pneumoniae).